The sequence spans 304 residues: Coenzyme PQQ synthesis protein B (304 aa).

This sequence belongs to the PqqB family.

It participates in cofactor biosynthesis; pyrroloquinoline quinone biosynthesis. May be involved in the transport of PQQ or its precursor to the periplasm. The polypeptide is Coenzyme PQQ synthesis protein B (Stutzerimonas stutzeri (Pseudomonas stutzeri)).